Here is a 305-residue protein sequence, read N- to C-terminus: Peroxisome biogenesis factor 2 (305 aa).

At 1 to 15 (MASRKENAKSANRVL) the chain is on the peroxisomal matrix side. The helical transmembrane segment at 16-42 (RISQLDALELNKALEQLVWSQFTQCFH) threads the bilayer. Residues 43-48 (GFKPGL) lie on the Cytoplasmic side of the membrane. A helical membrane pass occupies residues 49–74 (LARFEPEVKACLWVFLWRFTIYSKNA). Residues 75 to 98 (TVGQSVLNIKYKNDFSPNLRYQPP) are Peroxisomal matrix-facing. N6-acetyllysine is present on lysine 84. A helical transmembrane segment spans residues 99–125 (SKNQKIWYAVCTIGGRWLEERCYDLFR). Over 126–133 (NHHLASFG) the chain is Cytoplasmic. Residues 134 to 160 (KVKQCVNFVIGLLKLGGLINFLIFLQR) traverse the membrane as a helical segment. Over 161–187 (GKFATLTERLLGIHSVFCKPQNICEVG) the chain is Peroxisomal matrix. Residues 188-211 (FEYMNRELLWHGFAEFLIFLLPLI) traverse the membrane as a helical segment. At 212–305 (NVQKLKAKLS…GIEMSEVNAL (94 aa)) the chain is on the cytoplasmic side. Zn(2+)-binding residues include cysteine 244, cysteine 247, cysteine 259, histidine 261, cysteine 264, cysteine 267, cysteine 280, and cysteine 283. The segment at 244–284 (CALCGEWPTMPHTIGCEHIFCYFCAKSSFLFDVYFTCPKCG) adopts an RING-type zinc-finger fold.

It belongs to the pex2/pex10/pex12 family. Component of the PEX2-PEX10-PEX12 retrotranslocation channel, composed of PEX2, PEX10 and PEX12. Post-translationally, forms intramolecular and intermolecular disulfide bonds in response to reactive oxygen species (ROS), promoting higher stability.

Its subcellular location is the peroxisome membrane. It carries out the reaction [E2 ubiquitin-conjugating enzyme]-S-ubiquitinyl-L-cysteine + [acceptor protein]-L-cysteine = [E2 ubiquitin-conjugating enzyme]-L-cysteine + [acceptor protein]-S-ubiquitinyl-L-cysteine.. The enzyme catalyses S-ubiquitinyl-[E2 ubiquitin-conjugating enzyme]-L-cysteine + [acceptor protein]-L-lysine = [E2 ubiquitin-conjugating enzyme]-L-cysteine + N(6)-ubiquitinyl-[acceptor protein]-L-lysine.. It participates in protein modification; protein ubiquitination. Functionally, E3 ubiquitin-protein ligase component of a retrotranslocation channel required for peroxisome organization by mediating export of the PEX5 receptor from peroxisomes to the cytosol, thereby promoting PEX5 recycling. The retrotranslocation channel is composed of PEX2, PEX10 and PEX12; each subunit contributing transmembrane segments that coassemble into an open channel that specifically allows the passage of PEX5 through the peroxisomal membrane. PEX2 also regulates peroxisome organization by acting as a E3 ubiquitin-protein ligase. PEX2 ubiquitinates PEX5 during its passage through the retrotranslocation channel: catalyzes monoubiquitination of PEX5 at 'Cys-11', a modification that acts as a signal for PEX5 extraction into the cytosol. Required for pexophagy in response to starvation by mediating ubiquitination of peroxisomal proteins, such as PEX5 and ABCD3/PMP70. Also involved in the response to reactive oxygen species (ROS) by mediating 'Lys-48'-linked polyubiquitination and subsequent degradation of PNPLA2/ATGL, thereby regulating lipolysis. The polypeptide is Peroxisome biogenesis factor 2 (Homo sapiens (Human)).